The primary structure comprises 596 residues: Aspartate--tRNA(Asp/Asn) ligase (596 aa).

L-aspartate is bound at residue Glu-175. The interval 199 to 202 (QQYK) is aspartate. Arg-221 and His-454 together coordinate L-aspartate. Residue 221 to 223 (RDE) coordinates ATP. Residue Glu-488 participates in ATP binding. Arg-495 contacts L-aspartate. 540 to 543 (GVDR) is an ATP binding site.

This sequence belongs to the class-II aminoacyl-tRNA synthetase family. Type 1 subfamily. As to quaternary structure, homodimer.

The protein resides in the cytoplasm. The catalysed reaction is tRNA(Asx) + L-aspartate + ATP = L-aspartyl-tRNA(Asx) + AMP + diphosphate. Its function is as follows. Aspartyl-tRNA synthetase with relaxed tRNA specificity since it is able to aspartylate not only its cognate tRNA(Asp) but also tRNA(Asn). Reaction proceeds in two steps: L-aspartate is first activated by ATP to form Asp-AMP and then transferred to the acceptor end of tRNA(Asp/Asn). The chain is Aspartate--tRNA(Asp/Asn) ligase from Bartonella henselae (strain ATCC 49882 / DSM 28221 / CCUG 30454 / Houston 1) (Rochalimaea henselae).